Reading from the N-terminus, the 60-residue chain is Large ribosomal subunit protein bL32 (60 aa).

Over residues 1–16 (MPNPKRRHSKKRTSTR) the composition is skewed to basic residues. Residues 1 to 28 (MPNPKRRHSKKRTSTRRAHDALKQPGLS) form a disordered region.

It belongs to the bacterial ribosomal protein bL32 family.

The chain is Large ribosomal subunit protein bL32 from Solibacter usitatus (strain Ellin6076).